The chain runs to 133 residues: Nickel-responsive regulator (133 aa).

Ni(2+) contacts are provided by His76, His87, His89, and Cys95.

It belongs to the transcriptional regulatory CopG/NikR family. As to quaternary structure, homotetramer. Requires Ni(2+) as cofactor.

Its function is as follows. Transcriptional repressor of the nikABCDE operon. Is active in the presence of excessive concentrations of intracellular nickel. In Salmonella arizonae (strain ATCC BAA-731 / CDC346-86 / RSK2980), this protein is Nickel-responsive regulator.